The sequence spans 307 residues: MLRWARAWRVPRGVLGASSPRRLAVPVTFCSSRSSGQENADLRPLPLSYNLLDGDATLPAIVFLHGLFGSKTNFNSLAKAMVQRTGRRVLTVDARNHGDSPHSPDASYEAMSQDLQGLLPQLGLVPCVLVGHSMGGKTAMLLALQRPDVVERLVVVDISPVGTTPGSHIGAFIAAMKAVEIPEKVPHSQARKLADKQLSSVVKEAGIRQFLLTNLVEVGGRFSWRLNLDTLAQHLDKIMTFPQQREPYSGPTLFLLGGNSTYVQPSHHSEIRRLFPQAQIQTVPNAGHWVHSDKPQDFMDAVTSFLA.

A mitochondrion-targeting transit peptide spans 1–34; that stretch reads MLRWARAWRVPRGVLGASSPRRLAVPVTFCSSRS. Lysine 79 carries the post-translational modification N6-succinyllysine. The Charge relay system role is filled by serine 133. Lysine 196 bears the N6-succinyllysine mark. Catalysis depends on charge relay system residues aspartate 229 and histidine 288.

This sequence belongs to the AB hydrolase superfamily. In terms of assembly, interacts with OGDH and DLST; this interaction maintains the functional lipoylation of the 2-oxoglutarate dehydrogenase complex. Phosphorylated. As to expression, expressed in white adipose tissues.

It is found in the mitochondrion. It localises to the mitochondrion matrix. It carries out the reaction 1-octadecanoyl-2-(5Z,8Z,11Z,14Z-eicosatetraenoyl)-sn-glycerol + H2O = 2-(5Z,8Z,11Z,14Z-eicosatetraenoyl)-glycerol + octadecanoate + H(+). The enzyme catalyses a 1,2-diacyl-sn-glycerol + H2O = a 2-acylglycerol + a fatty acid + H(+). The catalysed reaction is a 1,3-diacyl-sn-glycerol + H2O = a 1-acyl-sn-glycerol + a fatty acid + H(+). It catalyses the reaction 1-octadecanoyl-2-(9Z-octadecenoyl)-sn-glycerol + H2O = 2-(9Z-octadecenoyl)-glycerol + octadecanoate + H(+). It carries out the reaction 1-octadecanoyl-2-(4Z,7Z,10Z,13Z,16Z,19Z-docosahexaenoyl)-sn-glycerol + H2O = 2-(4Z,7Z,10Z,13Z,16Z,19Z-docosahexaenoyl)-glycerol + octadecanoate + H(+). The enzyme catalyses 1,2-didecanoylglycerol + H2O = decanoylglycerol + decanoate + H(+). In terms of biological role, catalyzes the hydrolysis of diacylglycerol in vitro and may function as a key regulator in lipid metabolism, namely by regulating the intracellular levels of diacylglycerol. 1,2-diacyl-sn-glycerols are the preferred substrate over 1,3-diacyl-sn-glycerols. The enzyme hydrolyzes stearate in preference to palmitate from the sn-1 position of 1,2-diacyl-sn-glycerols. Maintains the functional lipoylation of the 2-oxoglutarate dehydrogenase complex (OGDHc) through its interaction with the OGDHc by preventing the formation of lipoyl adducts. In addition, is also required for the expansion and differentiation of embryonic stem cells (ESCs). This chain is sn-1-specific diacylglycerol lipase ABHD11, found in Mus musculus (Mouse).